The following is a 173-amino-acid chain: ATP synthase subunit b (173 aa).

A helical transmembrane segment spans residues 25 to 45 (LINLVIVIGVLYWFLKGFLGG).

Belongs to the ATPase B chain family. As to quaternary structure, F-type ATPases have 2 components, F(1) - the catalytic core - and F(0) - the membrane proton channel. F(1) has five subunits: alpha(3), beta(3), gamma(1), delta(1), epsilon(1). F(0) has four main subunits: a(1), b(1), b'(1) and c(10-14). The alpha and beta chains form an alternating ring which encloses part of the gamma chain. F(1) is attached to F(0) by a central stalk formed by the gamma and epsilon chains, while a peripheral stalk is formed by the delta, b and b' chains.

The protein localises to the cellular thylakoid membrane. F(1)F(0) ATP synthase produces ATP from ADP in the presence of a proton or sodium gradient. F-type ATPases consist of two structural domains, F(1) containing the extramembraneous catalytic core and F(0) containing the membrane proton channel, linked together by a central stalk and a peripheral stalk. During catalysis, ATP synthesis in the catalytic domain of F(1) is coupled via a rotary mechanism of the central stalk subunits to proton translocation. Functionally, component of the F(0) channel, it forms part of the peripheral stalk, linking F(1) to F(0). The polypeptide is ATP synthase subunit b (Synechococcus sp. (strain CC9311)).